We begin with the raw amino-acid sequence, 169 residues long: Protein-export protein SecB (169 aa).

The protein belongs to the SecB family. As to quaternary structure, homotetramer, a dimer of dimers. One homotetramer interacts with 1 SecA dimer.

Its subcellular location is the cytoplasm. One of the proteins required for the normal export of preproteins out of the cell cytoplasm. It is a molecular chaperone that binds to a subset of precursor proteins, maintaining them in a translocation-competent state. It also specifically binds to its receptor SecA. The protein is Protein-export protein SecB of Haemophilus influenzae (strain PittEE).